The chain runs to 320 residues: Retron Ec86 reverse transcriptase (320 aa).

Positions 34–248 constitute a Reverse transcriptase domain; sequence VETLRLLIYT…SQRKVTGLVI (215 aa). 3 residues coordinate Mg(2+): Asp119, Asp197, and Asp198. Positions 230-320 are necessary and required for recognition and binding of RNA; the sequence is KKTCISGPRS…GKNPLNKAKT (91 aa).

Belongs to the bacterial reverse transcriptase family.

The enzyme catalyses DNA(n) + a 2'-deoxyribonucleoside 5'-triphosphate = DNA(n+1) + diphosphate. In terms of biological role, reverse transcriptase (RT) component of antiviral defense system retron Ec86, composed of a non-coding RNA (ncRNA), a ribosyltransferase/DNA-binding protein and this RT. Expression of the 3-gene retron confers protection against bacteriophage T5. At multiplicity of infection (MOI) of 0.02 cultures grow normally when infected with T5 without collapsing, at MOI 2 cultures enter growth stasis. Responsible for synthesis of msDNA (a branched molecule with RNA linked by a 2',5'-phosphodiester bond to ssDNA). The retron transcript serves as primer (from a conserved internal G residue) and template for the reaction, and codes for the RT. Recognizes only its cognate RNA as a primer template. Overexpression of the ncRNA and RT (without the ribosyltransferase), which leads to increased levels of msDNA, is mutagenic in vivo. This may be due to a mismatch in the msDNA stem which binds and sequesters MutS and/or MutL. The protein is Retron Ec86 reverse transcriptase of Escherichia coli.